We begin with the raw amino-acid sequence, 142 residues long: HTH-type transcriptional regulator MntR (142 aa).

The HTH dtxR-type domain occupies 1 to 63; sequence MPTPSMEDYI…YEKYRGLVLT (63 aa). Mn(2+)-binding residues include aspartate 8, glutamate 11, histidine 77, glutamate 99, glutamate 102, and histidine 103.

Belongs to the DtxR/MntR family. As to quaternary structure, homodimer.

The protein localises to the cytoplasm. Its activity is regulated as follows. DNA binding is strongly activated by Mn(2+). Functionally, central regulator of manganese homeostasis. This chain is HTH-type transcriptional regulator MntR, found in Bacillus mycoides (strain KBAB4) (Bacillus weihenstephanensis).